The primary structure comprises 166 residues: Signal peptidase complex catalytic subunit SEC11 (166 aa).

Topologically, residues 1 to 9 (MNIRQQITQ) are cytoplasmic. The helical; Signal-anchor for type II membrane protein transmembrane segment at 10–30 (FLSLAYVFSSAFMLWKTLSVI) threads the bilayer. Topologically, residues 31 to 166 (ANSHSPIVVV…LGLSSLFSNE (136 aa)) are lumenal. Active-site charge relay system residues include Ser44, His83, and Asp108. The interval 152-163 (GMLGLLGLSSLF) is C-terminal short (CTS) helix.

The protein belongs to the peptidase S26B family. As to quaternary structure, component of the signal peptidase complex (SPC) composed of a catalytic subunit SEC11 and three accessory subunits SPC1, SPC2 and SPC3. The complex induces a local thinning of the ER membrane which is used to measure the length of the signal peptide (SP) h-region of protein substrates. This ensures the selectivity of the complex towards h-regions shorter than 18-20 amino acids. SPC associates with the translocon complex.

It is found in the endoplasmic reticulum membrane. The catalysed reaction is Cleavage of hydrophobic, N-terminal signal or leader sequences from secreted and periplasmic proteins.. Functionally, catalytic component of the signal peptidase complex (SPC) which catalyzes the cleavage of N-terminal signal sequences from nascent proteins as they are translocated into the lumen of the endoplasmic reticulum. Specifically cleaves N-terminal signal peptides that contain a hydrophobic alpha-helix (h-region) shorter than 18-20 amino acids. The protein is Signal peptidase complex catalytic subunit SEC11 (SEC11) of Candida albicans (strain SC5314 / ATCC MYA-2876) (Yeast).